Reading from the N-terminus, the 532-residue chain is Exopolysaccharide phosphotransferase CpsY (532 aa).

This sequence belongs to the stealth family.

This Mycobacterium bovis (strain ATCC BAA-935 / AF2122/97) protein is Exopolysaccharide phosphotransferase CpsY (cpsY).